The sequence spans 237 residues: F-box only protein 50 (237 aa).

The FBA domain maps to 31 to 231; the sequence is VFETKPFERN…VTDSSVIVKA (201 aa). The tract at residues 40 to 82 is disordered; it reads NLLQNPSPYGVNHTVPPPEPHRSGIPPPSDRPPQLEPEGNFSG. Residues 64-74 show a composition bias toward pro residues; that stretch reads IPPPSDRPPQL.

Expressed in nonspecific cytotoxic cells (NCC).

It localises to the cytoplasm. Functionally, may promote cell proliferation. This is F-box only protein 50 (nccrp1) from Danio rerio (Zebrafish).